The chain runs to 142 residues: Nucleoside diphosphate kinase (142 aa).

Residues Lys10, Phe58, Arg86, Thr92, Arg103, and Asn113 each coordinate ATP. The active-site Pros-phosphohistidine intermediate is the His116.

Belongs to the NDK family. As to quaternary structure, homotetramer. Requires Mg(2+) as cofactor.

It is found in the cytoplasm. It carries out the reaction a 2'-deoxyribonucleoside 5'-diphosphate + ATP = a 2'-deoxyribonucleoside 5'-triphosphate + ADP. It catalyses the reaction a ribonucleoside 5'-diphosphate + ATP = a ribonucleoside 5'-triphosphate + ADP. Major role in the synthesis of nucleoside triphosphates other than ATP. The ATP gamma phosphate is transferred to the NDP beta phosphate via a ping-pong mechanism, using a phosphorylated active-site intermediate. In Ehrlichia chaffeensis (strain ATCC CRL-10679 / Arkansas), this protein is Nucleoside diphosphate kinase.